We begin with the raw amino-acid sequence, 187 residues long: Calcium and integrin-binding family member 2 (187 aa).

EF-hand domains lie at 66–101 (RENP…LCES), 103–138 (PREL…LTKS), and 144–179 (EVVL…APDF). Residues D116, N118, D120, D127, D157, D159, D161, K163, and D168 each coordinate Ca(2+).

Monomer. Homodimer. Interacts with WHRN and MYO7A. Interacts with ITGA2B (via C-terminus cytoplasmic tail region); the interactions are stabilized/increased in a calcium and magnesium-dependent manner. Interacts with ITGA7 (via C-terminus cytoplasmic tail region); the interactions are stabilized/increased in a calcium and magnesium-dependent manner. Interacts with TMC1. Interacts with TMC2.

It is found in the cytoplasm. It localises to the cell projection. Its subcellular location is the stereocilium. The protein localises to the photoreceptor inner segment. The protein resides in the cilium. It is found in the photoreceptor outer segment. It localises to the cell membrane. Its subcellular location is the sarcolemma. Its function is as follows. Calcium- and integrin-binding protein that plays a role in intracellular calcium homeostasis. Acts as an auxiliary subunit of the sensory mechanoelectrical transduction (MET) channel in hair cells. Essential for mechanoelectrical transduction (MET) currents in auditory hair cells and thereby required for hearing. Regulates the function of hair cell mechanotransduction by controlling the distribution of transmembrane channel-like proteins TMC1 and TMC2, and by regulating the function of the MET channels in hair cells. Required for the maintenance of auditory hair cell stereocilia bundle morphology and function and for hair-cell survival in the cochlea. Critical for proper photoreceptor cell maintenance and function. Plays a role in intracellular calcium homeostasis by decreasing ATP-induced calcium release. The protein is Calcium and integrin-binding family member 2 (Cib2) of Rattus norvegicus (Rat).